The following is a 232-amino-acid chain: ATP synthase subunit a (232 aa).

Helical transmembrane passes span leucine 18 to isoleucine 38, tryptophan 74 to phenylalanine 94, threonine 107 to phenylalanine 127, alanine 142 to leucine 162, glycine 173 to valine 193, and serine 195 to isoleucine 215.

It belongs to the ATPase A chain family. As to quaternary structure, F-type ATPases have 2 components, CF(1) - the catalytic core - and CF(0) - the membrane proton channel. CF(1) has five subunits: alpha(3), beta(3), gamma(1), delta(1), epsilon(1). CF(0) has three main subunits: a, b and c.

The protein resides in the mitochondrion inner membrane. Its function is as follows. Mitochondrial membrane ATP synthase (F(1)F(0) ATP synthase or Complex V) produces ATP from ADP in the presence of a proton gradient across the membrane which is generated by electron transport complexes of the respiratory chain. F-type ATPases consist of two structural domains, F(1) - containing the extramembraneous catalytic core and F(0) - containing the membrane proton channel, linked together by a central stalk and a peripheral stalk. During catalysis, ATP synthesis in the catalytic domain of F(1) is coupled via a rotary mechanism of the central stalk subunits to proton translocation. Key component of the proton channel; it may play a direct role in the translocation of protons across the membrane. This chain is ATP synthase subunit a (ATP6), found in Paracentrotus lividus (Common sea urchin).